The primary structure comprises 179 residues: Large ribosomal subunit protein uL5 (179 aa).

The protein belongs to the universal ribosomal protein uL5 family. Part of the 50S ribosomal subunit; part of the 5S rRNA/L5/L18/L25 subcomplex. Contacts the 5S rRNA and the P site tRNA. Forms a bridge to the 30S subunit in the 70S ribosome.

This is one of the proteins that bind and probably mediate the attachment of the 5S RNA into the large ribosomal subunit, where it forms part of the central protuberance. In the 70S ribosome it contacts protein S13 of the 30S subunit (bridge B1b), connecting the 2 subunits; this bridge is implicated in subunit movement. Contacts the P site tRNA; the 5S rRNA and some of its associated proteins might help stabilize positioning of ribosome-bound tRNAs. In Anoxybacillus flavithermus (strain DSM 21510 / WK1), this protein is Large ribosomal subunit protein uL5.